The following is a 72-amino-acid chain: Translation initiation factor IF-1 (72 aa).

One can recognise an S1-like domain in the interval 1 to 72; it reads MAKEEAIEVE…TRGRIIFRER (72 aa).

Belongs to the IF-1 family. As to quaternary structure, component of the 30S ribosomal translation pre-initiation complex which assembles on the 30S ribosome in the order IF-2 and IF-3, IF-1 and N-formylmethionyl-tRNA(fMet); mRNA recruitment can occur at any time during PIC assembly.

Its subcellular location is the cytoplasm. In terms of biological role, one of the essential components for the initiation of protein synthesis. Stabilizes the binding of IF-2 and IF-3 on the 30S subunit to which N-formylmethionyl-tRNA(fMet) subsequently binds. Helps modulate mRNA selection, yielding the 30S pre-initiation complex (PIC). Upon addition of the 50S ribosomal subunit IF-1, IF-2 and IF-3 are released leaving the mature 70S translation initiation complex. This is Translation initiation factor IF-1 from Treponema denticola (strain ATCC 35405 / DSM 14222 / CIP 103919 / JCM 8153 / KCTC 15104).